The following is a 335-amino-acid chain: Beta-ketoacyl-[acyl-carrier-protein] synthase III 3 (335 aa).

Active-site residues include C114 and H256. Residues 257–261 (QANHR) form an ACP-binding region. N286 is a catalytic residue.

The protein belongs to the thiolase-like superfamily. FabH family. In terms of assembly, homodimer.

The protein resides in the cytoplasm. The enzyme catalyses malonyl-[ACP] + acetyl-CoA + H(+) = 3-oxobutanoyl-[ACP] + CO2 + CoA. It participates in lipid metabolism; fatty acid biosynthesis. In terms of biological role, catalyzes the condensation reaction of fatty acid synthesis by the addition to an acyl acceptor of two carbons from malonyl-ACP. Catalyzes the first condensation reaction which initiates fatty acid synthesis and may therefore play a role in governing the total rate of fatty acid production. Possesses both acetoacetyl-ACP synthase and acetyl transacylase activities. Its substrate specificity determines the biosynthesis of branched-chain and/or straight-chain of fatty acids. In Streptomyces coelicolor (strain ATCC BAA-471 / A3(2) / M145), this protein is Beta-ketoacyl-[acyl-carrier-protein] synthase III 3.